The sequence spans 763 residues: Photosystem I P700 chlorophyll a apoprotein A1 (763 aa).

A run of 8 helical transmembrane segments spans residues 72-95 (IFSAHFGHLAVIFIWLSGAYFHGA), 158-181 (LYVTAIGALVMAGLMLFAGWFHYH), 197-221 (LNHHLAGLLGLGSLSWAGHQIHVSL), 305-323 (TAHHHLAIAVLFIVAGHMY), 360-383 (WHAQLSINLAILGSISIIVAHHMY), 399-425 (LSLFTHHIWIGGFLIVGAGAHAAIFMV), 447-469 (AIISHLNWVCIWLGFHSFGLYIH), and 544-562 (FMVHHIHAFTIHVTALILL). [4Fe-4S] cluster contacts are provided by C586 and C595. 2 helical membrane passes run 602–623 (HVFLGLFWMYNSLSIVIFHYSW) and 677–699 (TSAYGLLFLGAHFVWAFSLMFLF). H688 serves as a coordination point for chlorophyll a'. The chlorophyll a site is built by M696 and Y704. W705 is a binding site for phylloquinone. A helical transmembrane segment spans residues 737-757 (AVGVAHYLLGGIVTTWSFFLA).

Belongs to the PsaA/PsaB family. In terms of assembly, the PsaA/B heterodimer binds the P700 chlorophyll special pair and subsequent electron acceptors. PSI consists of a core antenna complex that captures photons, and an electron transfer chain that converts photonic excitation into a charge separation. The cyanobacterial PSI reaction center is composed of one copy each of PsaA,B,C,D,E,F,I,J,K,L,M and X, and forms trimeric complexes. Requires PSI electron transfer chain: 5 chlorophyll a, 1 chlorophyll a', 2 phylloquinones and 3 4Fe-4S clusters. PSI core antenna: 90 chlorophyll a, 22 carotenoids, 3 phospholipids and 1 galactolipid. P700 is a chlorophyll a/chlorophyll a' dimer, A0 is one or more chlorophyll a, A1 is one or both phylloquinones and FX is a shared 4Fe-4S iron-sulfur center. as cofactor.

Its subcellular location is the cellular thylakoid membrane. It carries out the reaction reduced [plastocyanin] + hnu + oxidized [2Fe-2S]-[ferredoxin] = oxidized [plastocyanin] + reduced [2Fe-2S]-[ferredoxin]. In terms of biological role, psaA and PsaB bind P700, the primary electron donor of photosystem I (PSI), as well as the electron acceptors A0, A1 and FX. PSI is a plastocyanin/cytochrome c6-ferredoxin oxidoreductase, converting photonic excitation into a charge separation, which transfers an electron from the donor P700 chlorophyll pair to the spectroscopically characterized acceptors A0, A1, FX, FA and FB in turn. Oxidized P700 is reduced on the lumenal side of the thylakoid membrane by plastocyanin or cytochrome c6. In Synechococcus elongatus (strain ATCC 33912 / PCC 7942 / FACHB-805) (Anacystis nidulans R2), this protein is Photosystem I P700 chlorophyll a apoprotein A1.